Reading from the N-terminus, the 172-residue chain is Protein-export protein SecB (172 aa).

A disordered region spans residues 152–172 (AQGAEGGNSGIVMPDGSQARH).

This sequence belongs to the SecB family. Homotetramer, a dimer of dimers. One homotetramer interacts with 1 SecA dimer.

Its subcellular location is the cytoplasm. In terms of biological role, one of the proteins required for the normal export of preproteins out of the cell cytoplasm. It is a molecular chaperone that binds to a subset of precursor proteins, maintaining them in a translocation-competent state. It also specifically binds to its receptor SecA. This chain is Protein-export protein SecB, found in Cupriavidus taiwanensis (strain DSM 17343 / BCRC 17206 / CCUG 44338 / CIP 107171 / LMG 19424 / R1) (Ralstonia taiwanensis (strain LMG 19424)).